Consider the following 283-residue polypeptide: Bifunctional protein FolD (283 aa).

NADP(+) is bound by residues G164–S166, S189, and I230.

This sequence belongs to the tetrahydrofolate dehydrogenase/cyclohydrolase family. In terms of assembly, homodimer.

The catalysed reaction is (6R)-5,10-methylene-5,6,7,8-tetrahydrofolate + NADP(+) = (6R)-5,10-methenyltetrahydrofolate + NADPH. It catalyses the reaction (6R)-5,10-methenyltetrahydrofolate + H2O = (6R)-10-formyltetrahydrofolate + H(+). It functions in the pathway one-carbon metabolism; tetrahydrofolate interconversion. Functionally, catalyzes the oxidation of 5,10-methylenetetrahydrofolate to 5,10-methenyltetrahydrofolate and then the hydrolysis of 5,10-methenyltetrahydrofolate to 10-formyltetrahydrofolate. The chain is Bifunctional protein FolD from Lactobacillus delbrueckii subsp. bulgaricus (strain ATCC 11842 / DSM 20081 / BCRC 10696 / JCM 1002 / NBRC 13953 / NCIMB 11778 / NCTC 12712 / WDCM 00102 / Lb 14).